The primary structure comprises 1010 residues: Sodium/potassium-transporting ATPase subunit alpha-3 (1010 aa).

Positions 1-21 (MGDKGEKESPKKGKGKRDLDD) are disordered. Residues 1–74 (MGDKGEKESP…NALTPPPTTP (74 aa)) are Cytoplasmic-facing. An interaction with phosphoinositide-3 kinase region spans residues 69 to 71 (PPP). A helical membrane pass occupies residues 75-95 (EWVKFCRQLFGGFSILLWIGA). The Extracellular portion of the chain corresponds to 96 to 118 (ILCFLAYGIQAGTEDEPSNDNLY). Residues 119–139 (LGIVLAAVVIITGCFSYYQEA) traverse the membrane as a helical segment. Residues 140–275 (KSSKIMESFK…VGKTPIAVEI (136 aa)) are Cytoplasmic-facing. A helical membrane pass occupies residues 276-295 (EHFIQLITGVAVFLGISFFV). At 296–307 (LSLILGYTWLEA) the chain is on the extracellular side. Residues 308–325 (VIFLIGIIVANVPEGLLA) form a helical membrane-spanning segment. Residues 326-759 (TVTVCLTLTA…EEGRLIFDNL (434 aa)) are Cytoplasmic-facing. D363 serves as the catalytic 4-aspartylphosphate intermediate. Mg(2+) is bound by residues D704 and D708. A helical membrane pass occupies residues 760 to 779 (KKSIAYTLTSNIPEITPFLL). Over 780-789 (FIMANIPLPL) the chain is Extracellular. The chain crosses the membrane as a helical span at residues 790 to 810 (GTITILCIDLGTDMVPAISLA). Residues 811–830 (YEAAESDIMKRQPRNPRSDK) lie on the Cytoplasmic side of the membrane. The chain crosses the membrane as a helical span at residues 831–853 (LVNERLISMAYGQIGMIQALGGF). Residues 854–905 (FSYFVILAENGFLPSCLVGIRLSWDDRTINDLEDSYGQQWTYEQRKVVEFTC) lie on the Extracellular side of the membrane. A helical membrane pass occupies residues 906-925 (HTAFFVSIVVVQWADLIICK). Residues 926–938 (TRRNSVFQQGMKN) lie on the Cytoplasmic side of the membrane. A Phosphoserine; by PKA modification is found at S930. Residues 939–957 (KILIFGLFEETALAAFLSY) traverse the membrane as a helical segment. The Extracellular segment spans residues 958-972 (CPGMDVALRMYPLKP). A helical membrane pass occupies residues 973 to 993 (SWWFCAFPYSFLIFVYDEIRK). The Cytoplasmic portion of the chain corresponds to 994–1010 (LILRRNPGGWVEKETYY).

The protein belongs to the cation transport ATPase (P-type) (TC 3.A.3) family. Type IIC subfamily. In terms of assembly, the sodium/potassium-transporting ATPase is composed of a catalytic alpha subunit, an auxiliary non-catalytic beta subunit and an additional regulatory subunit.

The protein localises to the cell membrane. It catalyses the reaction K(+)(out) + Na(+)(in) + ATP + H2O = K(+)(in) + Na(+)(out) + ADP + phosphate + H(+). This is the catalytic component of the active enzyme, which catalyzes the hydrolysis of ATP coupled with the exchange of sodium and potassium ions across the plasma membrane. This action creates the electrochemical gradient of sodium and potassium ions, providing the energy for active transport of various nutrients. The chain is Sodium/potassium-transporting ATPase subunit alpha-3 (ATP1A3) from Gallus gallus (Chicken).